The sequence spans 455 residues: Nuclear distribution protein nudF (455 aa).

Residues 9–41 (QAEELHKSMIAYLVASDLPDTAAALRREVNLSE) form the LisH domain. The stretch at 61–88 (TSIARLQKKIMDLESRNATLQSELDNST) forms a coiled coil. WD repeat units lie at residues 113-154 (SHRD…RTLK), 156-196 (HTRA…KNIR), 200-239 (GHDHIVSAVRFIPSRNLLVSASRDNDMRIWDVTTGYCVKT), 242-281 (GHTDWVRDVSISFDGRFLFSTGQDMTARLWDISTVSNIEH), 287-347 (GHEN…LMTL), 349-388 (GHDSWVQALVFHPGGKYLLSVSDDKTLRCWDLNQQGKCVK), 392-438 (AHES…IQMR), and 440-455 (VVATGGWDQKLKIFAG). The disordered stretch occupies residues 408-431 (KNVPGGDGAAEGEGNDKNGAGSEN).

This sequence belongs to the WD repeat LIS1/nudF family. In terms of assembly, self-associates. Interacts with nudE and dynein.

The protein localises to the cytoplasm. It is found in the cytoskeleton. It localises to the spindle pole. Functionally, positively regulates the activity of the minus-end directed microtubule motor protein dynein. May enhance dynein-mediated microtubule sliding by targeting dynein to the microtubule plus end. Required for nuclear migration during vegetative growth as well as development. Required for retrograde early endosome (EE) transport from the hyphal tip. Required for localization of dynein to the mitotic spindle poles. Recruits additional proteins to the dynein complex at SPBs. This is Nuclear distribution protein nudF from Aspergillus flavus (strain ATCC 200026 / FGSC A1120 / IAM 13836 / NRRL 3357 / JCM 12722 / SRRC 167).